Here is a 247-residue protein sequence, read N- to C-terminus: 2,3-bisphosphoglycerate-dependent phosphoglycerate mutase (247 aa).

Substrate is bound by residues 8-15, 21-22, Arg-60, 87-90, Lys-98, 114-115, and 183-184; these read RHGESQWN, TG, ERHY, RR, and GN. The active-site Tele-phosphohistidine intermediate is the His-9. Glu-87 acts as the Proton donor/acceptor in catalysis.

This sequence belongs to the phosphoglycerate mutase family. BPG-dependent PGAM subfamily.

The enzyme catalyses (2R)-2-phosphoglycerate = (2R)-3-phosphoglycerate. Its pathway is carbohydrate degradation; glycolysis; pyruvate from D-glyceraldehyde 3-phosphate: step 3/5. Its function is as follows. Catalyzes the interconversion of 2-phosphoglycerate and 3-phosphoglycerate. This chain is 2,3-bisphosphoglycerate-dependent phosphoglycerate mutase, found in Chlorobium phaeobacteroides (strain BS1).